Reading from the N-terminus, the 516-residue chain is Multicopper oxidase CueO (516 aa).

A signal peptide (tat-type signal) is located at residues 1 to 28 (MQRRDFLKYSVALGVASALPLWSRAVFA). 3 consecutive Plastocyanin-like domains span residues 55–165 (GQST…IEDD), 227–292 (PRGW…DNKP), and 399–516 (GGKF…GFTV). The Cu cation site is built by His-101, His-103, His-141, and His-143. Residues His-443, His-446, His-448, His-499, Cys-500, His-501, and His-505 each coordinate Cu cation.

Belongs to the multicopper oxidase family. As to quaternary structure, monomer. Requires Cu cation as cofactor. Post-translationally, predicted to be exported by the Tat system. The position of the signal peptide cleavage has not been experimentally proven.

The protein localises to the periplasm. The enzyme catalyses 4 Cu(+) + O2 + 4 H(+) = 4 Cu(2+) + 2 H2O. Its function is as follows. Multicopper oxidase involved in copper homeostasis and copper tolerance under aerobic conditions. Is responsible for the oxidation of Cu(+) to the less harmful Cu(2+) in the periplasm, thereby preventing Cu(+) from entering the cytoplasm. This chain is Multicopper oxidase CueO (cueO), found in Escherichia coli O157:H7.